The chain runs to 161 residues: Pleiotrophin-B (161 aa).

Positions 1-23 (MHHQHGLFMLALLAFLLVMTVLG) are cleaved as a signal peptide. 5 cysteine pairs are disulfide-bonded: cysteine 41-cysteine 70, cysteine 49-cysteine 79, cysteine 56-cysteine 83, cysteine 93-cysteine 125, and cysteine 103-cysteine 135. 2 chondroitin sulfate binding regions span residues 86–93 (KKQFGAEC) and 117–125 (KRALHNAEC). A disordered region spans residues 136–161 (GKVTKPKLQESKKKKKEGKNKEKLLD). Positions 141–161 (PKLQESKKKKKEGKNKEKLLD) are chondroitin sulfate A binding.

Belongs to the pleiotrophin family. As to expression, expressed in high levels in brain and eye. Lower levels in bone. In the tailbud embryo stage, it is expressed exclusively in the central nervous system, especially in the hind region of the brain.

The protein resides in the secreted. Its function is as follows. Secreted growth factor that mediates its signal through cell-surface proteoglycan and non-proteoglycan receptors. Binds cell-surface proteoglycan receptor via their chondroitin sulfate (CS) groups. Thereby regulates many processes like cell proliferation, cell survival, cell growth, cell differentiation and cell migration. Has antibacterial activity against both Gram-positive and Gram-negative bacteria. This Xenopus laevis (African clawed frog) protein is Pleiotrophin-B (ptn-b).